The primary structure comprises 109 residues: Tetracenomycin F2 cyclase (109 aa).

In terms of assembly, homodimer.

It catalyses the reaction tetracenomycin F2 + H(+) = tetracenomycin F1 + H2O. The protein operates within antibiotic biosynthesis; tetracenomycin C biosynthesis. Its function is as follows. Catalyzing the conversion of tetracenomycin F2 to tetracenomycin F1. The polypeptide is Tetracenomycin F2 cyclase (tcmI) (Streptomyces glaucescens).